Here is a 464-residue protein sequence, read N- to C-terminus: ATP synthase subunit beta (464 aa).

ATP is bound at residue 152–159 (GGAGVGKT).

The protein belongs to the ATPase alpha/beta chains family. F-type ATPases have 2 components, CF(1) - the catalytic core - and CF(0) - the membrane proton channel. CF(1) has five subunits: alpha(3), beta(3), gamma(1), delta(1), epsilon(1). CF(0) has three main subunits: a(1), b(2) and c(9-12). The alpha and beta chains form an alternating ring which encloses part of the gamma chain. CF(1) is attached to CF(0) by a central stalk formed by the gamma and epsilon chains, while a peripheral stalk is formed by the delta and b chains.

It is found in the cell inner membrane. The catalysed reaction is ATP + H2O + 4 H(+)(in) = ADP + phosphate + 5 H(+)(out). Functionally, produces ATP from ADP in the presence of a proton gradient across the membrane. The catalytic sites are hosted primarily by the beta subunits. The sequence is that of ATP synthase subunit beta from Aliarcobacter butzleri (strain RM4018) (Arcobacter butzleri).